Consider the following 210-residue polypeptide: Large ribosomal subunit protein uL3 (210 aa).

The disordered stretch occupies residues 134-153; that stretch reads THGNSLSHRAPGSIGQNQTP. Q151 is subject to N5-methylglutamine.

This sequence belongs to the universal ribosomal protein uL3 family. Part of the 50S ribosomal subunit. Forms a cluster with proteins L14 and L19. Methylated by PrmB.

Its function is as follows. One of the primary rRNA binding proteins, it binds directly near the 3'-end of the 23S rRNA, where it nucleates assembly of the 50S subunit. This Aeromonas salmonicida (strain A449) protein is Large ribosomal subunit protein uL3.